We begin with the raw amino-acid sequence, 403 residues long: Digeranylgeranylglycerophospholipid reductase 1 (403 aa).

Residues A14, D33, C44, A45, G47, R98, V122, D277, G289, and I290 each coordinate FAD.

The protein belongs to the geranylgeranyl reductase family. DGGGPL reductase subfamily. FAD is required as a cofactor.

It catalyses the reaction a 2,3-bis-O-phytanyl-sn-glycerol 1-phospholipid + 8 A = a 2,3-bis-O-(geranylgeranyl)-sn-glycerol 1-phospholipid + 8 AH2. It carries out the reaction 2,3-bis-O-(phytanyl)-sn-glycerol 1-phosphate + 8 A = 2,3-bis-O-(geranylgeranyl)-sn-glycerol 1-phosphate + 8 AH2. The enzyme catalyses CDP-2,3-bis-O-(geranylgeranyl)-sn-glycerol + 8 AH2 = CDP-2,3-bis-O-(phytanyl)-sn-glycerol + 8 A. The catalysed reaction is archaetidylserine + 8 AH2 = 2,3-bis-O-phytanyl-sn-glycero-3-phospho-L-serine + 8 A. It participates in membrane lipid metabolism; glycerophospholipid metabolism. Its function is as follows. Is involved in the reduction of 2,3-digeranylgeranylglycerophospholipids (unsaturated archaeols) into 2,3-diphytanylglycerophospholipids (saturated archaeols) in the biosynthesis of archaeal membrane lipids. Catalyzes the formation of archaetidic acid (2,3-di-O-phytanyl-sn-glyceryl phosphate) from 2,3-di-O-geranylgeranylglyceryl phosphate (DGGGP) via the hydrogenation of each double bond of the isoprenoid chains. Is also probably able to reduce double bonds of geranyl groups in CDP-2,3-bis-O-(geranylgeranyl)-sn-glycerol and archaetidylserine, thus acting at various stages in the biosynthesis of archaeal membrane lipids. The polypeptide is Digeranylgeranylglycerophospholipid reductase 1 (Methanosphaera stadtmanae (strain ATCC 43021 / DSM 3091 / JCM 11832 / MCB-3)).